Here is a 459-residue protein sequence, read N- to C-terminus: Acetyltransferase pigO (459 aa).

It belongs to the trichothecene O-acetyltransferase family.

Its pathway is secondary metabolite biosynthesis. Its function is as follows. Acetyltransferase; part of the gene cluster that mediates the biosynthesis of azaphilone pigments (MonAzPs), a complex mixture of compounds with a common azaphilone skeleton very widely used as food colorants. PigM and pigO are involved in the elimination of the omega-1 alcohol with pigM acting as an O-acetyltransferase that synthesizes the O-11 acetyl intermediate whereas pigO eliminates acetic acid to yield an intermediate with a C10(11) double bond. The first step of the pathway is performed by the nrPKS pigA that forms the hexaketide precursor from successive condensations of five malonyl-CoA units, with a simple acetyl-CoA starter unit. The role of esterase pigG is not clear, but it may play at most a supplementary role in the formation of the benzaldehyde produced by the pigA nrPKS. This very reactive benzaldehyde is intercepted by the pigC ketoreductase that to provide the first stable enzyme-free MonAzPs intermediate, 6-(4-hydroxy-2-oxopentyl)-3-methyl-2,4-dioxocyclohexane carbaldehyde, also known as M7PKS-1. The FAD-dependent monooxygenase pigN hydroxylates M7PKS-1 at C-4, which triggers the formation of the pyran ring. PigJ, pigK and pigD are involved in the acetylation of the pyran ring. PigJ and pigK form the two subunits of a dedicated fungal FAS that produces the side chain fatty acyl moiety of MonAzPs and pigD transfers the fatty acyl chain to the C-4 alcohol. PigM and pigO are involved in the elimination of the omega-1 alcohol. PigM acts as an O-acetyltransferase that synthesizes the putative O-11 acetyl intermediate whereas pigO eliminates acetic acid to yield an intermediate with a C10(11) double bond. The dehydration of the C-11 alcohol followed by the reduction of the C6(7) double bond by the NAD(P)H-dependent oxidoreductase pigE increases the electrophilicity of the C-5 ketone of the resulting acyl benzopyran. This in turn sets up the C-5 ketone for an intramolecular Knoevenagel aldol condensation with the C-20 enol of the side chain. This condensation affords the characteristic linear tricyclic carbon skeletons of the yellow pigments that serve as the common precursors for the classical yellow pigments monascin and ankaflavin, orange pigments rubopunctatin and monascorubrin, and red pigments ribropunctamine and monascorubramine. The FAD-dependent oxidoreductase pigF is especially invoved in the biosynthesis of orange and red pigments via desaturation of C6(7). The sequence is that of Acetyltransferase pigO from Monascus ruber (Mold).